The primary structure comprises 171 residues: Probable deoxyuridine 5'-triphosphate nucleotidohydrolase (171 aa).

The protein belongs to the dCTP deaminase family. Archaeal dUTPase subfamily.

The enzyme catalyses dUTP + H2O = dUMP + diphosphate + H(+). It functions in the pathway pyrimidine metabolism; dUMP biosynthesis; dUMP from dCTP (dUTP route): step 2/2. This enzyme is involved in nucleotide metabolism: it produces dUMP, the immediate precursor of thymidine nucleotides and it decreases the intracellular concentration of dUTP so that uracil cannot be incorporated into DNA. This chain is Probable deoxyuridine 5'-triphosphate nucleotidohydrolase, found in Methanosarcina barkeri (strain Fusaro / DSM 804).